Here is a 159-residue protein sequence, read N- to C-terminus: Phosphopantetheine adenylyltransferase (159 aa).

Serine 9 contributes to the substrate binding site. Residues 9 to 10 (SF) and histidine 17 contribute to the ATP site. Substrate-binding residues include lysine 41, leucine 73, and lysine 87. ATP contacts are provided by residues 88-90 (GLR), glutamate 98, and 123-129 (YSYLSSS).

This sequence belongs to the bacterial CoaD family. In terms of assembly, homohexamer. It depends on Mg(2+) as a cofactor.

It localises to the cytoplasm. It catalyses the reaction (R)-4'-phosphopantetheine + ATP + H(+) = 3'-dephospho-CoA + diphosphate. It functions in the pathway cofactor biosynthesis; coenzyme A biosynthesis; CoA from (R)-pantothenate: step 4/5. Reversibly transfers an adenylyl group from ATP to 4'-phosphopantetheine, yielding dephospho-CoA (dPCoA) and pyrophosphate. This Clostridium botulinum (strain Alaska E43 / Type E3) protein is Phosphopantetheine adenylyltransferase.